A 320-amino-acid chain; its full sequence is GTP 3',8-cyclase (320 aa).

The region spanning 5–225 (QFGRKINYLR…IQLIKKDEKA (221 aa)) is the Radical SAM core domain. Residue Arg-14 coordinates GTP. [4Fe-4S] cluster contacts are provided by Cys-21 and Cys-25. Tyr-27 contacts S-adenosyl-L-methionine. Cys-28 is a [4Fe-4S] cluster binding site. Arg-64 is a GTP binding site. Gly-68 serves as a coordination point for S-adenosyl-L-methionine. GTP is bound at residue Thr-95. Ser-119 lines the S-adenosyl-L-methionine pocket. Lys-155 contacts GTP. Met-189 lines the S-adenosyl-L-methionine pocket. The [4Fe-4S] cluster site is built by Cys-248 and Cys-251. 253–255 (RIR) contacts GTP. Residue Cys-265 coordinates [4Fe-4S] cluster.

It belongs to the radical SAM superfamily. MoaA family. As to quaternary structure, monomer and homodimer. Requires [4Fe-4S] cluster as cofactor.

The catalysed reaction is GTP + AH2 + S-adenosyl-L-methionine = (8S)-3',8-cyclo-7,8-dihydroguanosine 5'-triphosphate + 5'-deoxyadenosine + L-methionine + A + H(+). It functions in the pathway cofactor biosynthesis; molybdopterin biosynthesis. Catalyzes the cyclization of GTP to (8S)-3',8-cyclo-7,8-dihydroguanosine 5'-triphosphate. This is GTP 3',8-cyclase from Campylobacter jejuni (strain RM1221).